The chain runs to 764 residues: FHF complex subunit HOOK interacting protein 2A (764 aa).

The disordered stretch occupies residues 190–236 (SEDGPKGQDPGSGDVSQCQQPQELSGATGVEPTESEEEPPHQMDDLS). Over residues 203–214 (DVSQCQQPQELS) the composition is skewed to polar residues.

This sequence belongs to the FHIP family.

In terms of biological role, may be required for proper functioning of the nervous system. The sequence is that of FHF complex subunit HOOK interacting protein 2A from Mus musculus (Mouse).